The following is a 319-amino-acid chain: MSKEMKGQYEPVAEIGVGAYGTVYKARDLQSGKFVALKNVRVQTNENGLPLSTVREVTLLKRLEHFDHPNIVKLMDVCASARTDRETKVTLVFEHVDQDLKTYLSKVPPPGLPLETIKDLMKQFLSGLEFLHLNCIVHRDLKPENILVTSGGQVKLADFGLARIYSCQMALTPVVVTLWYRAPEVLLQSTYATPVDVWSAGCIFAEMFKRKPLFCGNSEADQLCKIFDIIGLPSEEEWPVDVTLPRSAFSPRTQQPVDKFVPEIDAMGADLLLAMLTFSPQKRISASDALLHPFFADDPQACSKQEHFTHICTATDEVK.

Residues 9-295 enclose the Protein kinase domain; sequence YEPVAEIGVG…ASDALLHPFF (287 aa). ATP is bound by residues 15 to 23 and Lys38; that span reads IGVGAYGTV. Asp140 (proton acceptor) is an active-site residue. Thr172 bears the Phosphothreonine; by CAK mark.

The protein belongs to the protein kinase superfamily. CMGC Ser/Thr protein kinase family. CDC2/CDKX subfamily. In terms of assembly, forms a stable complex with D-type G1 cyclins.

Its subcellular location is the cytoplasm. The catalysed reaction is L-seryl-[protein] + ATP = O-phospho-L-seryl-[protein] + ADP + H(+). It carries out the reaction L-threonyl-[protein] + ATP = O-phospho-L-threonyl-[protein] + ADP + H(+). Phosphorylation at Thr-172 is necessary for enzymatic activity. Its function is as follows. Probably involved in the control of the cell cycle. The sequence is that of Cyclin-dependent kinase 4 (cdk4) from Xenopus laevis (African clawed frog).